Consider the following 298-residue polypeptide: Elongation factor Ts (298 aa).

The interval 79–82 is involved in Mg(2+) ion dislocation from EF-Tu; it reads TDFV.

It belongs to the EF-Ts family.

It is found in the cytoplasm. Functionally, associates with the EF-Tu.GDP complex and induces the exchange of GDP to GTP. It remains bound to the aminoacyl-tRNA.EF-Tu.GTP complex up to the GTP hydrolysis stage on the ribosome. The chain is Elongation factor Ts from Cereibacter sphaeroides (strain ATCC 17025 / ATH 2.4.3) (Rhodobacter sphaeroides).